Here is a 250-residue protein sequence, read N- to C-terminus: 5-oxoprolinase subunit A (250 aa).

The protein belongs to the LamB/PxpA family. Forms a complex composed of PxpA, PxpB and PxpC.

It catalyses the reaction 5-oxo-L-proline + ATP + 2 H2O = L-glutamate + ADP + phosphate + H(+). In terms of biological role, catalyzes the cleavage of 5-oxoproline to form L-glutamate coupled to the hydrolysis of ATP to ADP and inorganic phosphate. This is 5-oxoprolinase subunit A from Pseudomonas fluorescens (strain ATCC BAA-477 / NRRL B-23932 / Pf-5).